A 61-amino-acid chain; its full sequence is Probable tautomerase SSP1389 (61 aa).

The Proton acceptor; via imino nitrogen role is filled by proline 2.

Belongs to the 4-oxalocrotonate tautomerase family.

The sequence is that of Probable tautomerase SSP1389 from Staphylococcus saprophyticus subsp. saprophyticus (strain ATCC 15305 / DSM 20229 / NCIMB 8711 / NCTC 7292 / S-41).